Reading from the N-terminus, the 230-residue chain is Response regulator MprA (230 aa).

The Response regulatory domain maps to 4–118; the sequence is RILVVDDDRA…ELLARMRALL (115 aa). Asp48 carries the post-translational modification 4-aspartylphosphate. Positions 129 to 227 form a DNA-binding region, ompR/PhoB-type; the sequence is SMAMRFSDLT…VRGVGYVLRE (99 aa).

In terms of assembly, monomer. Interaction with each conserved 8-bp repeat requires tandem binding by two protein monomers. Phosphorylated and dephosphorylated by MprB.

Its subcellular location is the cytoplasm. In terms of biological role, member of the two-component regulatory system MprB/MprA which contributes to maintaining a balance among several systems involved in stress resistance and is required for establishment and maintenance of persistent infection in the host. Functions as a transcriptional regulator that recognizes a 19-bp nucleotide motif comprizing two loosely conserved 8-bp direct DNA-binding motif repeats separated by a 3-bp spacer region. MprB/MprA up-regulates expression of mprA and pepD. This Mycobacterium bovis (strain ATCC BAA-935 / AF2122/97) protein is Response regulator MprA (mprA).